The sequence spans 371 residues: Lysine racemase (371 aa).

Lys-39 acts as the Proton acceptor in catalysis. An N6-(pyridoxal phosphate)lysine modification is found at Lys-39. Arg-135 contributes to the substrate binding site. Catalysis depends on Tyr-266, which acts as the Proton acceptor. Substrate is bound at residue Met-313.

It belongs to the alanine racemase family. Homodimer. It depends on pyridoxal 5'-phosphate as a cofactor.

The enzyme catalyses L-lysine = D-lysine. Functionally, catalyzes the interconversion of D-lysine and L-lysine. Can also use arginine and ornithine, but not alanine. In Oenococcus oeni (strain ATCC BAA-331 / PSU-1), this protein is Lysine racemase.